A 118-amino-acid chain; its full sequence is Late cornified envelope protein 1F (118 aa).

The segment covering 1–10 has biased composition (low complexity); that stretch reads MSCQQSQQQC. Disordered stretches follow at residues 1–23 and 82–118; these read MSCQQSQQQCQPPPKCTPKCPPK and RRRSHRHRPQSSDCCSQPSAGSSCCGGGSGQHSGGCC. Residues 11-23 are compositionally biased toward pro residues; sequence QPPPKCTPKCPPK. The segment covering 95–104 has biased composition (low complexity); that stretch reads CCSQPSAGSS. Gly residues predominate over residues 105–118; the sequence is CCGGGSGQHSGGCC.

The protein belongs to the LCE family. Skin-specific. Expression was readily detected in adult trunk skin, adult arm skin, fetal skin, penal skin, vulva, esophagus and tongue. Not expressed in the cervix, rectum, lung, colon, or placenta. Expression is observed in the fibroblasts.

Functionally, precursors of the cornified envelope of the stratum corneum. The polypeptide is Late cornified envelope protein 1F (LCE1F) (Homo sapiens (Human)).